The chain runs to 380 residues: Cytochrome b (380 aa).

The next 4 membrane-spanning stretches (helical) occupy residues 34–54 (FGSL…LLAT), 78–99 (WLIR…YLHI), 114–134 (WNTG…GYVL), and 179–199 (FFAL…IHLT). Heme b-binding residues include His84 and His98. His183 and His197 together coordinate heme b. Residue His202 coordinates a ubiquinone. 4 helical membrane-spanning segments follow: residues 227-247 (LKDI…ALFS), 289-309 (LGGV…PLLH), 321-341 (LSQL…WVGS), and 348-368 (FIII…LLFP).

The protein belongs to the cytochrome b family. In terms of assembly, the cytochrome bc1 complex contains 11 subunits: 3 respiratory subunits (MT-CYB, CYC1 and UQCRFS1), 2 core proteins (UQCRC1 and UQCRC2) and 6 low-molecular weight proteins (UQCRH/QCR6, UQCRB/QCR7, UQCRQ/QCR8, UQCR10/QCR9, UQCR11/QCR10 and a cleavage product of UQCRFS1). This cytochrome bc1 complex then forms a dimer. Heme b serves as cofactor.

It localises to the mitochondrion inner membrane. Functionally, component of the ubiquinol-cytochrome c reductase complex (complex III or cytochrome b-c1 complex) that is part of the mitochondrial respiratory chain. The b-c1 complex mediates electron transfer from ubiquinol to cytochrome c. Contributes to the generation of a proton gradient across the mitochondrial membrane that is then used for ATP synthesis. In Uria lomvia (Thick-billed murre), this protein is Cytochrome b (MT-CYB).